Consider the following 855-residue polypeptide: Mitochondrial 15S rRNA processing factor CCM1 (855 aa).

Residues 29-61 form a disordered region; that stretch reads PTAMRTRRRTRRHEREPNLRKRQGGSHSNLKEN. 3 PPR repeats span residues 234–265, 317–351, and 354–388; these read DVDM…MKKL, NKVN…SLSH, and DVAT…KMEP.

The protein belongs to the CCM1 family. As to quaternary structure, binds to mitochondrial small subunit 15S rRNA.

It localises to the mitochondrion. Its function is as follows. Regulates mitochondrial small subunit maturation by controlling 15S rRNA 5'-end processing. Localizes to the 5' precursor of the 15S rRNA in a position that is subsequently occupied by mS47 in the mature yeast mtSSU. Uses structure and sequence-specific RNA recognition, binding to a single-stranded region of the precursor and specifically recognizing bases -6 to -1. The exchange of Ccm1 for mS47 is coupled to the irreversible removal of precursor rRNA that is accompanied by conformational changes of the mitoribosomal proteins uS5m and mS26. These conformational changes signal completion of 5'-end rRNA processing through protection of the mature 5'-end of the 15S rRNA and stabilization of mS47. The removal of the 5' precursor together with the dissociation of Ccm1 may be catalyzed by the 5'-3' exoribonuclease Pet127. Involved in the specific removal of group I introns in mitochondrial encoded transcripts. This Eremothecium gossypii (strain ATCC 10895 / CBS 109.51 / FGSC 9923 / NRRL Y-1056) (Yeast) protein is Mitochondrial 15S rRNA processing factor CCM1 (CCM1).